A 156-amino-acid polypeptide reads, in one-letter code: Transcription elongation factor GreA (156 aa).

A coiled-coil region spans residues 2–27 (EKTFPMTKEGLDKLKAELENLKLVKR).

Belongs to the GreA/GreB family.

Necessary for efficient RNA polymerase transcription elongation past template-encoded arresting sites. The arresting sites in DNA have the property of trapping a certain fraction of elongating RNA polymerases that pass through, resulting in locked ternary complexes. Cleavage of the nascent transcript by cleavage factors such as GreA or GreB allows the resumption of elongation from the new 3'terminus. GreA releases sequences of 2 to 3 nucleotides. The chain is Transcription elongation factor GreA from Lactococcus lactis subsp. cremoris (strain MG1363).